The following is a 316-amino-acid chain: MRTTSLLLLLGSLMAVPATQAADASDWLNRLAEADRQNSFQGTFVYERNGSFSTHEIWHRVESDGAVRERLLQLDGARQEVVRVDGRTQCISGGLADQLADAQLWPVRKFDPSQLASWYDLRLVGESRVAGRPAVVLAVTPRDQHRYGFELHLDRDTGLPLKSLLLNEKGQLLERFQFTQLNTGAAPAEDQLQAGAECQVVGPAKADGEKTVAWRSEWLPPGFTLTRSFMRRSPVTPDPVACLTYGDGLARFSVFIEPLHGAMVGDARSQLGPTVVVSKRLQTDDGGQMVTVVGEVPLGTAERVALSIRPEAAAQK.

Positions methionine 1–alanine 21 are cleaved as a signal peptide.

It belongs to the RseB family.

It localises to the periplasm. In terms of biological role, negative regulator of the sigma factor AlgU. Plays a role in the differentiation of P.aeruginosa into the alginate-producing form. Inactivation of mucB causes conversion to mucoidy. The sequence is that of Sigma factor AlgU regulatory protein MucB (mucB) from Pseudomonas aeruginosa (strain ATCC 15692 / DSM 22644 / CIP 104116 / JCM 14847 / LMG 12228 / 1C / PRS 101 / PAO1).